Reading from the N-terminus, the 333-residue chain is Glycerol-3-phosphate dehydrogenase [NAD(P)+] (333 aa).

NADPH contacts are provided by serine 10, tryptophan 11, histidine 31, arginine 32, and lysine 105. Sn-glycerol 3-phosphate contacts are provided by lysine 105, glycine 136, and serine 138. Residue alanine 140 coordinates NADPH. Sn-glycerol 3-phosphate-binding residues include lysine 191, aspartate 244, serine 254, arginine 255, and asparagine 256. Lysine 191 functions as the Proton acceptor in the catalytic mechanism. Arginine 255 is a binding site for NADPH. 2 residues coordinate NADPH: valine 279 and glutamate 281.

It belongs to the NAD-dependent glycerol-3-phosphate dehydrogenase family.

Its subcellular location is the cytoplasm. It catalyses the reaction sn-glycerol 3-phosphate + NAD(+) = dihydroxyacetone phosphate + NADH + H(+). It carries out the reaction sn-glycerol 3-phosphate + NADP(+) = dihydroxyacetone phosphate + NADPH + H(+). The protein operates within membrane lipid metabolism; glycerophospholipid metabolism. In terms of biological role, catalyzes the reduction of the glycolytic intermediate dihydroxyacetone phosphate (DHAP) to sn-glycerol 3-phosphate (G3P), the key precursor for phospholipid synthesis. The protein is Glycerol-3-phosphate dehydrogenase [NAD(P)+] of Chlorobium limicola (strain DSM 245 / NBRC 103803 / 6330).